Reading from the N-terminus, the 217-residue chain is Glutathione S-transferase 1 (217 aa).

The GST N-terminal domain occupies 1 to 83 (MVMTLYKLDA…YLVSKYGADD (83 aa)). Residues S11, 53-55 (HTV), and 67-69 (DSH) contribute to the glutathione site. The region spanning 89–211 (DPKKRAIVDQ…APGNDLCKDL (123 aa)) is the GST C-terminal domain.

This sequence belongs to the GST superfamily. Theta family. Homodimer.

The enzyme catalyses RX + glutathione = an S-substituted glutathione + a halide anion + H(+). Functionally, conjugation of reduced glutathione to a wide number of exogenous and endogenous hydrophobic electrophiles. This is Glutathione S-transferase 1 (GST1) from Manduca sexta (Tobacco hawkmoth).